Here is a 795-residue protein sequence, read N- to C-terminus: Myosin light chain kinase 3 (795 aa).

Ser155 is modified (phosphoserine). 2 disordered regions span residues 236-257 and 305-328; these read GPGQ…ASEN and SSGP…GDAL. Phosphoserine occurs at positions 351 and 432. The tract at residues 367-452 is disordered; it reads DQIPKGARPF…GPGRTEAGRL (86 aa). Positions 491-746 constitute a Protein kinase domain; that stretch reads VSQHEVLGGG…ATQCLKHEWL (256 aa). Residues 497–505 and Lys520 contribute to the ATP site; that span reads LGGGRFGQV. Catalysis depends on Asp612, which acts as the Proton acceptor.

It belongs to the protein kinase superfamily. CAMK Ser/Thr protein kinase family. Mg(2+) is required as a cofactor. In terms of processing, phosphorylated on serine residues. In terms of tissue distribution, restricted to cardiomyocytes (at protein level). Down-regulated in heart after experimental myocardial infarction at the protein level; no significant changes at the mRNA level.

It is found in the cytoplasm. The enzyme catalyses L-seryl-[myosin light chain] + ATP = O-phospho-L-seryl-[myosin light chain] + ADP + H(+). It carries out the reaction L-threonyl-[myosin light chain] + ATP = O-phospho-L-threonyl-[myosin light chain] + ADP + H(+). In terms of biological role, kinase that phosphorylates MYL2 in vitro. Has been proposed to be calmodulin-dependent, although MYL2 phosphorylation has also been observed in the presence or absence of calmodulin. Promotes sarcomere formation in cardiomyocytes and increases cardiomyocyte contractility. In Mus musculus (Mouse), this protein is Myosin light chain kinase 3 (Mylk3).